A 252-amino-acid chain; its full sequence is 3-deoxy-manno-octulosonate cytidylyltransferase (252 aa).

This sequence belongs to the KdsB family.

Its subcellular location is the cytoplasm. It catalyses the reaction 3-deoxy-alpha-D-manno-oct-2-ulosonate + CTP = CMP-3-deoxy-beta-D-manno-octulosonate + diphosphate. It functions in the pathway nucleotide-sugar biosynthesis; CMP-3-deoxy-D-manno-octulosonate biosynthesis; CMP-3-deoxy-D-manno-octulosonate from 3-deoxy-D-manno-octulosonate and CTP: step 1/1. It participates in bacterial outer membrane biogenesis; lipopolysaccharide biosynthesis. Its function is as follows. Activates KDO (a required 8-carbon sugar) for incorporation into bacterial lipopolysaccharide in Gram-negative bacteria. The chain is 3-deoxy-manno-octulosonate cytidylyltransferase from Nitratidesulfovibrio vulgaris (strain DP4) (Desulfovibrio vulgaris).